We begin with the raw amino-acid sequence, 165 residues long: Protein SprT (165 aa).

Positions 20-163 (EKLTQANLKL…RCVHCGEQLV (144 aa)) constitute a SprT-like domain. A Zn(2+)-binding site is contributed by His78. Glu79 is an active-site residue. His82 is a binding site for Zn(2+).

It belongs to the SprT family. Requires Zn(2+) as cofactor.

Its subcellular location is the cytoplasm. This Escherichia coli O139:H28 (strain E24377A / ETEC) protein is Protein SprT.